The chain runs to 376 residues: N-acetyldiaminopimelate deacetylase (376 aa).

Residue aspartate 69 is part of the active site. Glutamate 128 serves as the catalytic Proton acceptor.

It belongs to the peptidase M20A family. N-acetyldiaminopimelate deacetylase subfamily.

It carries out the reaction N-acetyl-(2S,6S)-2,6-diaminopimelate + H2O = (2S,6S)-2,6-diaminopimelate + acetate. Its pathway is amino-acid biosynthesis; L-lysine biosynthesis via DAP pathway; LL-2,6-diaminopimelate from (S)-tetrahydrodipicolinate (acetylase route): step 3/3. Functionally, catalyzes the conversion of N-acetyl-diaminopimelate to diaminopimelate and acetate. The sequence is that of N-acetyldiaminopimelate deacetylase from Streptococcus pneumoniae (strain JJA).